Consider the following 421-residue polypeptide: Subtilisin-like protease 2 (421 aa).

The N-terminal stretch at 1-16 is a signal peptide; it reads MQLLNFGLLLLPFVAG. Positions 17–122 are excised as a propeptide; sequence DLAPQPEPLL…VHPDQHVYLA (106 aa). In terms of domain architecture, Inhibitor I9 spans 36 to 122; the sequence is QYIVTLKEGL…VHPDQHVYLA (87 aa). The Peptidase S8 domain occupies 131–421; the sequence is RWGLGYMSSK…ERKFTLPKYF (291 aa). Active-site charge relay system residues include Asp-169 and His-201. Asn-248, Asn-261, and Asn-348 each carry an N-linked (GlcNAc...) asparagine glycan. Residue Ser-357 is the Charge relay system of the active site. Asn-388 is a glycosylation site (N-linked (GlcNAc...) asparagine).

The protein belongs to the peptidase S8 family.

It localises to the secreted. In terms of biological role, secreted subtilisin-like serine protease with keratinolytic activity that contributes to pathogenicity. This Trichophyton tonsurans (Scalp ringworm fungus) protein is Subtilisin-like protease 2 (SUB2).